A 513-amino-acid chain; its full sequence is RNA-splicing ligase RtcB homolog (513 aa).

Mn(2+) contacts are provided by D127, C130, H235, H267, and H361. Residue 234–238 (NHYAE) coordinates GMP. GMP-binding positions include 361–362 (HN), 410–413 (GGTM), S417, 436–439 (HGAG), and K512. H436 acts as the GMP-histidine intermediate in catalysis.

It belongs to the RtcB family. In terms of assembly, catalytic component of the tRNA-splicing ligase complex. It depends on Mn(2+) as a cofactor.

The catalysed reaction is a 3'-end 3'-phospho-ribonucleotide-RNA + a 5'-end dephospho-ribonucleoside-RNA + GTP = a ribonucleotidyl-ribonucleotide-RNA + GMP + diphosphate. The enzyme catalyses a 3'-end 2',3'-cyclophospho-ribonucleotide-RNA + a 5'-end dephospho-ribonucleoside-RNA + GTP + H2O = a ribonucleotidyl-ribonucleotide-RNA + GMP + diphosphate + H(+). Its function is as follows. Catalytic subunit of the tRNA-splicing ligase complex that acts by directly joining spliced tRNA halves to mature-sized tRNAs by incorporating the precursor-derived splice junction phosphate into the mature tRNA as a canonical 3',5'-phosphodiester. May act as an RNA ligase with broad substrate specificity, and may function toward other RNAs. The polypeptide is RNA-splicing ligase RtcB homolog (Micromonas commoda (strain RCC299 / NOUM17 / CCMP2709) (Picoplanktonic green alga)).